We begin with the raw amino-acid sequence, 216 residues long: SPbeta prophage-derived uncharacterized protein YomX (216 aa).

The protein is SPbeta prophage-derived uncharacterized protein YomX (yomX) of Bacillus subtilis (strain 168).